Consider the following 274-residue polypeptide: Eukaryotic translation initiation factor 3 subunit J (274 aa).

2 disordered regions span residues 1–120 (MSGK…DLKH) and 227–246 (EEKAAEKGGKKSKAAKTKTS). A compositionally biased stretch (acidic residues) spans 30–50 (DEEGNESDVLDSWDAAEDSEV). Positions 46-112 (EDSEVEREKA…AERRERLRRE (67 aa)) form a coiled coil. Composition is skewed to basic and acidic residues over residues 51 to 67 (EREKAKKAAEAKAKAEA) and 79 to 92 (RIAERQAERARQLA). Acidic residues predominate over residues 93–102 (EDSDAEEETE). Residues 103–120 (AERRERLRREQKESDLKH) show a composition bias toward basic and acidic residues.

This sequence belongs to the eIF-3 subunit J family. Component of the eukaryotic translation initiation factor 3 (eIF-3) complex.

It is found in the cytoplasm. Functionally, component of the eukaryotic translation initiation factor 3 (eIF-3) complex, which is involved in protein synthesis of a specialized repertoire of mRNAs and, together with other initiation factors, stimulates binding of mRNA and methionyl-tRNAi to the 40S ribosome. The eIF-3 complex specifically targets and initiates translation of a subset of mRNAs involved in cell proliferation. The chain is Eukaryotic translation initiation factor 3 subunit J (hcr-1) from Neurospora crassa (strain ATCC 24698 / 74-OR23-1A / CBS 708.71 / DSM 1257 / FGSC 987).